The chain runs to 510 residues: Bifunctional purine biosynthesis protein PurH (510 aa).

The region spanning 1 to 142 is the MGS-like domain; the sequence is MRALLSVSDK…KNFKDVLIVT (142 aa).

It belongs to the PurH family.

The catalysed reaction is (6R)-10-formyltetrahydrofolate + 5-amino-1-(5-phospho-beta-D-ribosyl)imidazole-4-carboxamide = 5-formamido-1-(5-phospho-D-ribosyl)imidazole-4-carboxamide + (6S)-5,6,7,8-tetrahydrofolate. It carries out the reaction IMP + H2O = 5-formamido-1-(5-phospho-D-ribosyl)imidazole-4-carboxamide. It functions in the pathway purine metabolism; IMP biosynthesis via de novo pathway; 5-formamido-1-(5-phospho-D-ribosyl)imidazole-4-carboxamide from 5-amino-1-(5-phospho-D-ribosyl)imidazole-4-carboxamide (10-formyl THF route): step 1/1. It participates in purine metabolism; IMP biosynthesis via de novo pathway; IMP from 5-formamido-1-(5-phospho-D-ribosyl)imidazole-4-carboxamide: step 1/1. The polypeptide is Bifunctional purine biosynthesis protein PurH (Campylobacter concisus (strain 13826)).